The following is a 1012-amino-acid chain: Formate dehydrogenase subunit alpha (1012 aa).

Positions 1 to 35 (MLIKRRAFLKLTAAGATLSAFGGLGVDLAPAKAQA) form a signal peptide, tat-type signal. In terms of domain architecture, 4Fe-4S Mo/W bis-MGD-type spans 45–103 (AKQTTSVCCYCSVGCGLIVHTDKKTNRAINVEGDPDHPINEGSLCAKGASTWQLAENER). The [4Fe-4S] cluster site is built by C52, C55, C59, and C89. W-bis(molybdopterin guanine dinucleotide) is bound at residue U193. Residue U193 is a non-standard amino acid, selenocysteine. Ca(2+) contacts are provided by T393, K395, K398, L428, and N430. C852 and C879 are joined by a disulfide.

This sequence belongs to the prokaryotic molybdopterin-containing oxidoreductase family. In terms of assembly, heterodimer of alpha (FdhA) and beta (FdhB) subunits. The cofactor is [4Fe-4S] cluster. Requires W-bis(molybdopterin guanine dinucleotide) as cofactor. In terms of processing, the disulfide bond is likely to be broken in the active form of this enzyme. Post-translationally, predicted to be exported by the Tat system. The position of the signal peptide cleavage has been experimentally proven.

It is found in the periplasm. The enzyme catalyses formate + NAD(+) = CO2 + NADH. Its function is as follows. Alpha chain of the formate dehydrogenase (FDH) catalyze the reversible two-electron oxidation of formate to carbon dioxide. FDH loses activity in the presence of air, but this activity can be restored. The alpha subunit of formate dehydrogenase forms the active site. This Megalodesulfovibrio gigas (Desulfovibrio gigas) protein is Formate dehydrogenase subunit alpha.